Reading from the N-terminus, the 345-residue chain is Gibberellin receptor GID1A (345 aa).

Position 2 is an N-acetylalanine (Ala2). The short motif at 113 to 115 (HGG) is the Involved in the stabilization of the negatively charged intermediate by the formation of the oxyanion hole element. Residues 115–116 (GS), Tyr127, and Ser191 contribute to the gibberellin A4 site. Residues Ser116, Tyr127, Ser191, and Phe238 each contribute to the gibberellin A3 site. Residue Ser191 is part of the active site. The active site involves Asp289. Gibberellin A4 is bound at residue Gly320. Gly320 contributes to the gibberellin A3 binding site.

This sequence belongs to the 'GDXG' lipolytic enzyme family. Interacts (via N-terminus) with the DELLA proteins GAI, RGA, RGL1, RGL2 and RGL3 (via N-terminus) in a GA-dependent manner. In terms of tissue distribution, widely expressed.

Its subcellular location is the nucleus. Functionally, functions as a soluble gibberellin (GA) receptor. GA is an essential hormone that regulates growth and development in plants. Binds with high affinity the biologically active gibberellin GA4, but has no affinity for the biologically inactive GAs. In response to GA, interacts with specific DELLA proteins, known as repressors of GA-induced growth, and targets them for degradation via proteasome. Seems to be required for GA signaling that controls root growth, seed germination, stem elongation and flower development. Partially redundant with GID1B and GID1C. The polypeptide is Gibberellin receptor GID1A (GID1A) (Arabidopsis thaliana (Mouse-ear cress)).